The primary structure comprises 745 residues: NAD(P)H-quinone oxidoreductase subunit 5, chloroplastic (745 aa).

16 helical membrane passes run 9-29 (WIIP…LLLF), 50-70 (WAFP…DLSI), 99-119 (IDSL…FVLI), 135-155 (FAYM…CNLI), 157-177 (IYIF…FWFT), 194-214 (IGDF…GSFE), 229-249 (NEVH…GAVA), 268-288 (TPIS…FLVA), 290-310 (LFPL…IGII), 337-357 (LGYM…FHLI), 364-384 (ALLF…VGYS), 406-426 (IAFL…CFWS), 435-455 (WLYS…TAFY), 550-570 (LFPM…AIPF), 610-630 (FSVS…KPFY), and 724-744 (FYLL…YFIL).

Belongs to the complex I subunit 5 family. In terms of assembly, NDH is composed of at least 16 different subunits, 5 of which are encoded in the nucleus.

The protein localises to the plastid. It localises to the chloroplast thylakoid membrane. The enzyme catalyses a plastoquinone + NADH + (n+1) H(+)(in) = a plastoquinol + NAD(+) + n H(+)(out). It catalyses the reaction a plastoquinone + NADPH + (n+1) H(+)(in) = a plastoquinol + NADP(+) + n H(+)(out). NDH shuttles electrons from NAD(P)H:plastoquinone, via FMN and iron-sulfur (Fe-S) centers, to quinones in the photosynthetic chain and possibly in a chloroplast respiratory chain. The immediate electron acceptor for the enzyme in this species is believed to be plastoquinone. Couples the redox reaction to proton translocation, and thus conserves the redox energy in a proton gradient. The protein is NAD(P)H-quinone oxidoreductase subunit 5, chloroplastic (ndhF) of Gossypium barbadense (Sea Island cotton).